A 398-amino-acid chain; its full sequence is MRKKECIAMLLAGGQGSRLGCLTRNIPKPAVSFAGKYRIIDFSLSNCSNSNIDTVGVLTQYKPFALNTYINMGSAWDLNCLNGGIHILPPFVGEAQGSWYKGTANAIYQNMDFINFYNPEYILILSGDHIYQMDYYEMLSCHKQKHAEVTLSAIAVPWEEASRFGVMVTDAGGRIIRFEEKPPRPESNLASMGVYIFNWDVLKEALLEDERDPQSDHDFGKNVLPRLLQQGRRLYSYLFHGYWRDVGTIESYYNANMEVLQEERVDKFFELKQRVFSNEEILAPQHLGERAKIHNSLIGNGCTILGEVRDSVIASGVYVGEGSLIEQSILLPNSEIYEDVRLHKTILGENAIVRAHCRIGDKREGNPPQEGITVIGDHLHIPEGTVISEGENVRKDTA.

Residues Tyr100, Gly165, 180-181, and Ser191 each bind alpha-D-glucose 1-phosphate; that span reads EK.

Belongs to the bacterial/plant glucose-1-phosphate adenylyltransferase family. As to quaternary structure, homotetramer.

The enzyme catalyses alpha-D-glucose 1-phosphate + ATP + H(+) = ADP-alpha-D-glucose + diphosphate. The protein operates within glycan biosynthesis; glycogen biosynthesis. In terms of biological role, involved in the biosynthesis of ADP-glucose, a building block required for the elongation reactions to produce glycogen. Catalyzes the reaction between ATP and alpha-D-glucose 1-phosphate (G1P) to produce pyrophosphate and ADP-Glc. This is Glucose-1-phosphate adenylyltransferase from Desulfitobacterium hafniense (strain DSM 10664 / DCB-2).